A 312-amino-acid polypeptide reads, in one-letter code: Olfactory receptor 2B8 (312 aa).

The Extracellular segment spans residues 1-25; it reads MDQKNGSSFTGFILLGFSDRPQLEL. Residue N5 is glycosylated (N-linked (GlcNAc...) asparagine). Residues 26-49 form a helical membrane-spanning segment; sequence VLFVVLLIFYIFTLLGNKTIIVLS. The Cytoplasmic segment spans residues 50–57; the sequence is HLDPHLHT. The chain crosses the membrane as a helical span at residues 58–79; it reads PMYFFFSNLSFLDLCYTTGIVP. Topologically, residues 80 to 100 are extracellular; sequence QLLVNLRGADKSISYGGCVVQ. A disulfide bridge links C97 with C189. The helical transmembrane segment at 101-120 threads the bilayer; it reads LYISLGLGSTECVLLGVMVF. Residues 121 to 139 are Cytoplasmic-facing; the sequence is DRYAAVCRPLHYTVVMHPC. Residues 140-158 form a helical membrane-spanning segment; sequence LYVLMASTSWVIGFANSLL. Over 159 to 195 the chain is Extracellular; that stretch reads QTVLILLLTLCGRNKLEHFLCEVPPLLKLACVDTTMN. N-linked (GlcNAc...) asparagine glycosylation occurs at N195. Residues 196 to 219 form a helical membrane-spanning segment; the sequence is ESELFFVSVIILLVPVALIIFSYS. Residues 220-236 are Cytoplasmic-facing; sequence QIVRAVMRIKLATGQRK. The chain crosses the membrane as a helical span at residues 237 to 259; sequence VFGTCGSHLTVVSLFYGTAIYAY. Over 260-272 the chain is Extracellular; it reads LQPGNNYSQDQGK. Residue N265 is glycosylated (N-linked (GlcNAc...) asparagine). Residues 273-292 form a helical membrane-spanning segment; the sequence is FISLFYTIITPMINPLIYTL. The Cytoplasmic portion of the chain corresponds to 293–312; the sequence is RNKDVKGALKKVLWKNYDSR.

The protein belongs to the G-protein coupled receptor 1 family.

It is found in the cell membrane. Functionally, odorant receptor. The protein is Olfactory receptor 2B8 of Homo sapiens (Human).